The primary structure comprises 791 residues: Endonuclease MutS2 (791 aa).

Gly-337 to Thr-344 serves as a coordination point for ATP. The interval Ala-689–Glu-715 is disordered. Positions Ser-703–Ser-713 are enriched in low complexity. Residues Leu-716–Gln-791 enclose the Smr domain.

The protein belongs to the DNA mismatch repair MutS family. MutS2 subfamily. In terms of assembly, homodimer. Binds to stalled ribosomes, contacting rRNA.

Its function is as follows. Endonuclease that is involved in the suppression of homologous recombination and thus may have a key role in the control of bacterial genetic diversity. Acts as a ribosome collision sensor, splitting the ribosome into its 2 subunits. Detects stalled/collided 70S ribosomes which it binds and splits by an ATP-hydrolysis driven conformational change. Acts upstream of the ribosome quality control system (RQC), a ribosome-associated complex that mediates the extraction of incompletely synthesized nascent chains from stalled ribosomes and their subsequent degradation. Probably generates substrates for RQC. This Lactobacillus gasseri (strain ATCC 33323 / DSM 20243 / BCRC 14619 / CIP 102991 / JCM 1131 / KCTC 3163 / NCIMB 11718 / NCTC 13722 / AM63) protein is Endonuclease MutS2.